We begin with the raw amino-acid sequence, 171 residues long: MTAILVTGYRSFELGIFSEKDKRVAIIKKAIKRDLIAYLEEGVDWFIFTGNLGFEQWALEVANDLKKTYPLKTATIFAFETHGSTWNDRNQQHLQQFRATDFVKYSYPSYESPKQLKSYHHFLIHNTDGAYLFYDSEHETRLSYLVAAMKEQPCYPLSFLNFERLNDIADE.

The protein belongs to the UPF0398 family.

The protein is UPF0398 protein Sez_1569 of Streptococcus equi subsp. zooepidemicus (strain MGCS10565).